Reading from the N-terminus, the 132-residue chain is ATP synthase epsilon chain (132 aa).

This sequence belongs to the ATPase epsilon chain family. F-type ATPases have 2 components, CF(1) - the catalytic core - and CF(0) - the membrane proton channel. CF(1) has five subunits: alpha(3), beta(3), gamma(1), delta(1), epsilon(1). CF(0) has three main subunits: a, b and c.

It localises to the cell inner membrane. In terms of biological role, produces ATP from ADP in the presence of a proton gradient across the membrane. This chain is ATP synthase epsilon chain, found in Gloeobacter violaceus (strain ATCC 29082 / PCC 7421).